Consider the following 103-residue polypeptide: MSSTIPLAWYLMLSAFLFICGVIGFMIKRNIITIFMCIELMLNAVNLTFVAYATELRSLSGHIFVFFVMVVAAAESAVGLGIIIAVFRSRETLNVDRVNLLKL.

3 consecutive transmembrane segments (helical) span residues Leu-7–Ile-27, Ile-31–Ala-51, and Ile-63–Ile-83.

The protein belongs to the complex I subunit 4L family. As to quaternary structure, NDH-1 is composed of 14 different subunits. Subunits NuoA, H, J, K, L, M, N constitute the membrane sector of the complex.

It localises to the cell inner membrane. It catalyses the reaction a quinone + NADH + 5 H(+)(in) = a quinol + NAD(+) + 4 H(+)(out). Functionally, NDH-1 shuttles electrons from NADH, via FMN and iron-sulfur (Fe-S) centers, to quinones in the respiratory chain. The immediate electron acceptor for the enzyme in this species is believed to be ubiquinone. Couples the redox reaction to proton translocation (for every two electrons transferred, four hydrogen ions are translocated across the cytoplasmic membrane), and thus conserves the redox energy in a proton gradient. This Koribacter versatilis (strain Ellin345) protein is NADH-quinone oxidoreductase subunit K 2.